The following is a 576-amino-acid chain: Non-neuronal cytoplasmic intermediate filament protein (576 aa).

The disordered stretch occupies residues 1–51 (MTSKISTTYEEEGRQSKIQPRAFVITRSGPSSKSSSFSARQSYASSRQSIT). Residues 2–75 (TSKISTTYEE…FRGTREKEKR (74 aa)) form a head region. Positions 28-49 (SGPSSKSSSFSARQSYASSRQS) are enriched in low complexity. The IF rod domain maps to 73–425 (EKREMQNLNE…KLLEGEESRV (353 aa)). Positions 76–108 (EMQNLNERLASYIEKVHFLDAQVKKLEAENEAL) are coil 1A. Positions 109–122 (RNRKSESLQPIRDA) are linker 1. The tract at residues 123-260 (YENELAQARK…DLLDQLELLK (138 aa)) is coil 1B. Residues 261–278 (PEPIQIKGMDYAEFWKSE) form a linker 2 region. Residues 279-425 (LSKCVREIQS…KLLEGEESRV (147 aa)) are coil 2. The tail stretch occupies residues 426–576 (GLRSLVEQAI…KATLIAKFSG (151 aa)). In terms of domain architecture, LTD spans 456-574 (GSMTIQRSSK…NEKATLIAKF (119 aa)).

This sequence belongs to the intermediate filament family. In terms of assembly, can form homopolymers.

The protein localises to the cytoplasm. In Cornu aspersum (Brown garden snail), this protein is Non-neuronal cytoplasmic intermediate filament protein.